The chain runs to 3391 residues: Genome polyprotein (3391 aa).

Residues 1–15 (MNNQRKKAKNTPFNM) are interaction with host EXOC1. The Cytoplasmic segment spans residues 1–101 (MNNQRKKAKN…LNILNRRRRS (101 aa)). Residues 37 to 72 (MLQGRGPLKLFMALVAFLRFLTIPPTAGILKRWGTI) form a hydrophobic; homodimerization of capsid protein C region. Positions 101–114 (SAGMIIMLIPTVMA) are cleaved as a propeptide — ER anchor for the capsid protein C, removed in mature form by serine protease NS3. Residues 102-122 (AGMIIMLIPTVMAFHLTTRNG) traverse the membrane as a helical segment. Topologically, residues 123–238 (EPHMIVSRQE…GAWKHAQRIE (116 aa)) are extracellular. An N-linked (GlcNAc...) asparagine; by host glycan is attached at Asn-183. A helical membrane pass occupies residues 239–259 (TWILRHPGFTIMAAILAYTIG). Over 260–265 (TTHFQR) the chain is Cytoplasmic. A helical membrane pass occupies residues 266–280 (ALIFILLTAVAPSMT). The Extracellular segment spans residues 281 to 725 (MRCIGISNRD…LHQVFGAIYG (445 aa)). Intrachain disulfides connect Cys-283-Cys-310, Cys-340-Cys-401, Cys-354-Cys-385, and Cys-372-Cys-396. N-linked (GlcNAc...) asparagine; by host glycosylation occurs at Asn-347. Positions 378-391 (DRGWGNGCGLFGKG) are fusion peptide. An N-linked (GlcNAc...) asparagine; by host glycan is attached at Asn-433. Intrachain disulfides connect Cys-465/Cys-565 and Cys-582/Cys-613. A helical membrane pass occupies residues 726-746 (AAFSGVSWTMKILIGVIITWI). At 747-752 (GMNSRS) the chain is on the cytoplasmic side. The chain crosses the membrane as a helical span at residues 753–773 (TSLSVSLVLVGIVTLYLGVMV). Residues 774–1195 (QADSGCVVSW…MVGATMTDDI (422 aa)) lie on the Extracellular side of the membrane. Disulfide bonds link Cys-779–Cys-790, Cys-830–Cys-918, Cys-954–Cys-998, Cys-1055–Cys-1104, Cys-1066–Cys-1088, and Cys-1087–Cys-1091. Residues Asn-905 and Asn-982 are each glycosylated (N-linked (GlcNAc...) asparagine; by host). A glycan (N-linked (GlcNAc...) asparagine; by host) is linked at Asn-1134. The chain crosses the membrane as a helical span at residues 1196–1220 (GMGVTYLALLAAFKVRPTFAAGLLL). The Cytoplasmic portion of the chain corresponds to 1221 to 1226 (RKLTSK). The helical transmembrane segment at 1227 to 1245 (ELMMTTIGIVLLSQSTIPE) threads the bilayer. Residues 1246–1269 (TILELTDALALGMMVLKMVRNMEK) are Lumenal-facing. The helical transmembrane segment at 1270 to 1290 (YQLAVTIMAILCVPNAVILQN) threads the bilayer. Residue Ala-1291 is a topological domain, cytoplasmic. The helical transmembrane segment at 1292–1310 (WKVSCTILAVVSVSPLLLT) threads the bilayer. Over 1311–1317 (SSQQKTD) the chain is Lumenal. The chain crosses the membrane as a helical span at residues 1318–1338 (WIPLALTIKGLNPTAIFLTTL). Residues 1339–1346 (SRTSKKRS) are Cytoplasmic-facing. Residues 1347-1367 (WPLNEAIMAVGMVSILASSLL) traverse the membrane as a helical segment. The Lumenal portion of the chain corresponds to 1368–1370 (KND). The helical transmembrane segment at 1371 to 1391 (IPMTGPLVAGGLLTVCYVLTG) threads the bilayer. Residues 1392-1447 (RSADLELERAADVKWEDQAEISGSSPILSITISEDGSMSIKNEEEEQTLTILIRTG) are Cytoplasmic-facing. Residues 1398 to 1437 (LERAADVKWEDQAEISGSSPILSITISEDGSMSIKNEEEE) form an interacts with and activates NS3 protease region. Residues 1448–1468 (LLVISGLFPVSIPITAAAWYL) constitute an intramembrane region (helical). Residues 1469–2147 (WEVKKQRAGV…LSELPETLET (679 aa)) lie on the Cytoplasmic side of the membrane. Positions 1476–1653 (AGVLWDVPSP…EKSIEDNPEI (178 aa)) constitute a Peptidase S7 domain. Active-site charge relay system; for serine protease NS3 activity residues include His-1526, Asp-1550, and Ser-1610. The region spanning 1655 to 1811 (DDIFRKRRLT…QSNAPIIDEE (157 aa)) is the Helicase ATP-binding domain. Residues 1659–1662 (RKRR) are important for RNA-binding. 1668 to 1675 (LHPGAGKT) is an ATP binding site. The DEAH box signature appears at 1759–1762 (DEAH). One can recognise a Helicase C-terminal domain in the interval 1821-1988 (SGHEWVTDFK…IIPSMFEPER (168 aa)). The residue at position 1863 (Lys-1863) is an N6-acetyllysine; by host. The helical transmembrane segment at 2148 to 2168 (LLLLTLLATVTGGIFLFLMSG) threads the bilayer. Topologically, residues 2169 to 2170 (RG) are lumenal. The segment at residues 2171-2191 (IGKMTLGMCCIITASVLLWYA) is an intramembrane region (helical). A topological domain (lumenal) is located at residue Gln-2192. Residues 2193-2213 (IQPHWIAASIILEFFLIVLLI) traverse the membrane as a helical segment. The Cytoplasmic segment spans residues 2214–2228 (PEPEKQRTPQDNQLT). Residues 2229–2249 (YVVIAILTVVAATMANEMGFL) form a helical membrane-spanning segment. The Lumenal portion of the chain corresponds to 2250–2274 (EKTKKDLGLGSIATQQPESNILDID). An intramembrane region (helical) is located at residues 2275-2295 (LRPASAWTLYAVATTFVTPML). The Lumenal segment spans residues 2296–2316 (RHSIENSSVNVSLTAIANQAT). Asn-2301 and Asn-2305 each carry an N-linked (GlcNAc...) asparagine; by host glycan. Residues 2317 to 2337 (VLMGLGKGWPLSKMDIGVPLL) constitute an intramembrane region (helical). Residues 2338 to 2347 (AIGCYSQVNP) lie on the Lumenal side of the membrane. A helical membrane pass occupies residues 2348-2368 (ITLTAALLLLVAHYAIIGPGL). Residues 2369-2413 (QAKATREAQKRAAAGIMKNPTVDGITVIDLDPIPYDPKFEKQLGQ) are Cytoplasmic-facing. The helical transmembrane segment at 2414–2434 (VMLLVLCVTQVLMMRTTWALC) threads the bilayer. At 2435-2459 (EALTLATGPISTLWEGNPGRFWNTT) the chain is on the lumenal side. An N-linked (GlcNAc...) asparagine; by host glycan is attached at Asn-2457. Residues 2460 to 2480 (IAVSMANIFRGSYLAGAGLLF) traverse the membrane as a helical segment. Residues 2481-3391 (SIMKNTTNTR…REEEEAGVLW (911 aa)) lie on the Cytoplasmic side of the membrane. The 263-residue stretch at 2493–2755 (TGNIGETLGE…DVDLGSGTRN (263 aa)) folds into the mRNA cap 0-1 NS5-type MT domain. Ser-2547 serves as a coordination point for S-adenosyl-L-methionine. Ser-2547 carries the post-translational modification Phosphoserine. The active-site For 2'-O-MTase activity is Lys-2552. The SUMO-interacting motif signature appears at 2568–2571 (VVDL). S-adenosyl-L-methionine contacts are provided by Gly-2577, Trp-2578, Thr-2595, Lys-2596, Asp-2622, and Val-2623. The active-site For 2'-O-MTase activity is the Asp-2637. Ile-2638 contributes to the S-adenosyl-L-methionine binding site. Residues Lys-2672 and Glu-2708 each act as for 2'-O-MTase activity in the active site. Tyr-2710 lines the S-adenosyl-L-methionine pocket. The Zn(2+) site is built by Glu-2929, His-2933, Cys-2938, and Cys-2941. The region spanning 3020-3169 (AMYADDTAGW…PLDDRFASAL (150 aa)) is the RdRp catalytic domain. Residues His-3203, Cys-3219, and Cys-3338 each coordinate Zn(2+).

In the N-terminal section; belongs to the class I-like SAM-binding methyltransferase superfamily. mRNA cap 0-1 NS5-type methyltransferase family. Homodimer. Interacts (via N-terminus) with host EXOC1 (via C-terminus); this interaction results in EXOC1 degradation through the proteasome degradation pathway. As to quaternary structure, forms heterodimers with envelope protein E in the endoplasmic reticulum and Golgi. In terms of assembly, homodimer; in the endoplasmic reticulum and Golgi. Interacts with protein prM. Interacts with non-structural protein 1. Homodimer; Homohexamer when secreted. Interacts with envelope protein E. Interacts with host PRKAA1. As to quaternary structure, interacts (via N-terminus) with serine protease NS3. In terms of assembly, forms a heterodimer with serine protease NS3. May form homooligomers. Forms a heterodimer with NS2B. Interacts with NS4B. Interacts with unphosphorylated RNA-directed RNA polymerase NS5; this interaction stimulates RNA-directed RNA polymerase NS5 guanylyltransferase activity. Interacts with host SHFL. As to quaternary structure, interacts with host MAVS; this interaction inhibits the synthesis of IFN-beta. Interacts with host SHFL. Interacts with host AUP1; the interaction occurs in the presence of Dengue virus NS4B and induces lipophagy which facilitates production of virus progeny particles. May interact with host SRPRA and SEC61G. In terms of assembly, interacts with serine protease NS3. Homodimer. Interacts with host STAT2; this interaction inhibits the phosphorylation of the latter, and, when all viral proteins are present (polyprotein), targets STAT2 for degradation. Interacts with serine protease NS3. Interacts with host PAF1 complex; the interaction may prevent the recruitment of the PAF1 complex to interferon-responsive genes, and thus reduces the immune response. In terms of processing, specific enzymatic cleavages in vivo yield mature proteins. Cleavages in the lumen of endoplasmic reticulum are performed by host signal peptidase, whereas cleavages in the cytoplasmic side are performed by serine protease NS3. Signal cleavage at the 2K-4B site requires a prior NS3 protease-mediated cleavage at the 4A-2K site. Cleaved in post-Golgi vesicles by a host furin, releasing the mature small envelope protein M, and peptide pr. This cleavage is incomplete as up to 30% of viral particles still carry uncleaved prM. Post-translationally, N-glycosylated. In terms of processing, N-glycosylated. The excreted form is glycosylated and this is required for efficient secretion of the protein from infected cells. Acetylated by host KAT5. Acetylation modulates NS3 RNA-binding and unwinding activities and plays an important positive role for viral replication. Post-translationally, phosphorylated on serines residues. This phosphorylation may trigger NS5 nuclear localization. In terms of processing, sumoylation of RNA-directed RNA polymerase NS5 increases NS5 protein stability allowing proper viral RNA replication.

It localises to the virion. The protein localises to the host nucleus. It is found in the host cytoplasm. The protein resides in the host perinuclear region. Its subcellular location is the secreted. It localises to the virion membrane. The protein localises to the host endoplasmic reticulum membrane. It is found in the host mitochondrion. It catalyses the reaction Selective hydrolysis of -Xaa-Xaa-|-Yaa- bonds in which each of the Xaa can be either Arg or Lys and Yaa can be either Ser or Ala.. It carries out the reaction RNA(n) + a ribonucleoside 5'-triphosphate = RNA(n+1) + diphosphate. The enzyme catalyses a ribonucleoside 5'-triphosphate + H2O = a ribonucleoside 5'-diphosphate + phosphate + H(+). The catalysed reaction is ATP + H2O = ADP + phosphate + H(+). It catalyses the reaction a 5'-end (5'-triphosphoguanosine)-ribonucleoside in mRNA + S-adenosyl-L-methionine = a 5'-end (N(7)-methyl 5'-triphosphoguanosine)-ribonucleoside in mRNA + S-adenosyl-L-homocysteine. It carries out the reaction a 5'-end (N(7)-methyl 5'-triphosphoguanosine)-ribonucleoside in mRNA + S-adenosyl-L-methionine = a 5'-end (N(7)-methyl 5'-triphosphoguanosine)-(2'-O-methyl-ribonucleoside) in mRNA + S-adenosyl-L-homocysteine + H(+). Functionally, plays a role in virus budding by binding to the cell membrane and gathering the viral RNA into a nucleocapsid that forms the core of a mature virus particle. During virus entry, may induce genome penetration into the host cytoplasm after hemifusion induced by the surface proteins. Can migrate to the cell nucleus where it modulates host functions. Overcomes the anti-viral effects of host EXOC1 by sequestering and degrading the latter through the proteasome degradation pathway. In terms of biological role, inhibits RNA silencing by interfering with host Dicer. Prevents premature fusion activity of envelope proteins in trans-Golgi by binding to envelope protein E at pH6.0. After virion release in extracellular space, gets dissociated from E dimers. Its function is as follows. Acts as a chaperone for envelope protein E during intracellular virion assembly by masking and inactivating envelope protein E fusion peptide. prM is the only viral peptide matured by host furin in the trans-Golgi network probably to avoid catastrophic activation of the viral fusion activity in acidic Golgi compartment prior to virion release. prM-E cleavage is inefficient, and many virions are only partially matured. These uncleaved prM would play a role in immune evasion. Functionally, may play a role in virus budding. Exerts cytotoxic effects by activating a mitochondrial apoptotic pathway through M ectodomain. May display a viroporin activity. In terms of biological role, binds to host cell surface receptor and mediates fusion between viral and cellular membranes. Envelope protein is synthesized in the endoplasmic reticulum in the form of heterodimer with protein prM. They play a role in virion budding in the ER, and the newly formed immature particle is covered with 60 spikes composed of heterodimer between precursor prM and envelope protein E. The virion is transported to the Golgi apparatus where the low pH causes dissociation of PrM-E heterodimers and formation of E homodimers. prM-E cleavage is inefficient, and many virions are only partially matured. These uncleaved prM would play a role in immune evasion. Involved in immune evasion, pathogenesis and viral replication. Once cleaved off the polyprotein, is targeted to three destinations: the viral replication cycle, the plasma membrane and the extracellular compartment. Essential for viral replication. Required for formation of the replication complex and recruitment of other non-structural proteins to the ER-derived membrane structures. Excreted as a hexameric lipoparticle that plays a role against host immune response. Antagonizing the complement function. Binds to the host macrophages and dendritic cells. Inhibits signal transduction originating from Toll-like receptor 3 (TLR3). Mediates complement activation, which may contribute to the pathogenesis of the vascular leakage that occurs in severe dengue disease. Activates autophagy through the AMPK/ERK/mTOR signaling pathway. Mechanistically, acts as the assembly platform for STK11-AMPK interactions and promotes STK11-AMPK interactions. In turn, promotes phosphorylation of the AMPK kinase structural domain and activates AMPK, thereby positively regulating the AMPK/ERK/mTOR signaling pathway and inducing autophagy. Its function is as follows. Disrupts the host endothelial glycocalyx layer of host pulmonary microvascular endothelial cells, inducing degradation of sialic acid and shedding of heparan sulfate proteoglycans. NS1 induces expression of sialidases, heparanase, and activates cathepsin L, which activates heparanase via enzymatic cleavage. These effects are probably linked to the endothelial hyperpermeability observed in severe dengue disease. Functionally, component of the viral RNA replication complex that functions in virion assembly and antagonizes the host immune response. In terms of biological role, required cofactor for the serine protease function of NS3. May have membrane-destabilizing activity and form viroporins. Displays three enzymatic activities: serine protease, NTPase and RNA helicase. NS3 serine protease, in association with NS2B, performs its autocleavage and cleaves the polyprotein at dibasic sites in the cytoplasm: C-prM, NS2A-NS2B, NS2B-NS3, NS3-NS4A, NS4A-2K and NS4B-NS5. NS3 RNA helicase binds RNA and unwinds dsRNA in the 3' to 5' direction. Its function is as follows. Regulates the ATPase activity of the NS3 helicase activity. NS4A allows NS3 helicase to conserve energy during unwinding. Plays a role in the inhibition of the host innate immune response. Interacts with host MAVS and thereby prevents the interaction between RIGI and MAVS. In turn, IFN-beta production is impaired. Interacts with host AUP1 which mediates induction of lipophagy in host cells and facilitates production of virus progeny particles. Functionally, functions as a signal peptide for NS4B and is required for the interferon antagonism activity of the latter. In terms of biological role, induces the formation of ER-derived membrane vesicles where the viral replication takes place. Inhibits interferon (IFN)-induced host STAT1 phosphorylation and nuclear translocation, thereby preventing the establishment of cellular antiviral state by blocking the IFN-alpha/beta pathway. Replicates the viral (+) and (-) RNA genome, and performs the capping of genomes in the cytoplasm. NS5 methylates viral RNA cap at guanine N-7 and ribose 2'-O positions. Besides its role in RNA genome replication, also prevents the establishment of cellular antiviral state by blocking the interferon-alpha/beta (IFN-alpha/beta) signaling pathway. Inhibits host TYK2 and STAT2 phosphorylation, thereby preventing activation of JAK-STAT signaling pathway. May reduce immune responses by preventing the recruitment of the host PAF1 complex to interferon-responsive genes. This chain is Genome polyprotein, found in Aedimorphus (Red guenon).